The following is a 310-amino-acid chain: Putative methyltransferase mtx subunit H (310 aa).

It belongs to the MtrH family. As to quaternary structure, may be part of a complex composed of 3 subunits; MtxA, MtxH and MtxX.

The sequence is that of Putative methyltransferase mtx subunit H (mtxH) from Methanosarcina acetivorans (strain ATCC 35395 / DSM 2834 / JCM 12185 / C2A).